The sequence spans 308 residues: Acetaldehyde dehydrogenase 2 (308 aa).

12-15 (SGNI) is a binding site for NAD(+). The active-site Acyl-thioester intermediate is cysteine 127. Residues 162 to 170 (SAGPGTRAN) and asparagine 281 each bind NAD(+).

This sequence belongs to the acetaldehyde dehydrogenase family.

The enzyme catalyses acetaldehyde + NAD(+) + CoA = acetyl-CoA + NADH + H(+). This Mycobacterium marinum (strain ATCC BAA-535 / M) protein is Acetaldehyde dehydrogenase 2.